A 795-amino-acid polypeptide reads, in one-letter code: Serine/threonine-protein kinase MARK1 (795 aa).

Residues 1 to 41 (MSARTPLPTVNERDTENHTSVDGYTETHIPPAKSSSRQNLP) are disordered. T5 carries the post-translational modification Phosphothreonine. In terms of domain architecture, Protein kinase spans 60–311 (YRLQKTIGKG…LEQIMKDRWM (252 aa)). ATP is bound by residues 66 to 74 (IGKGNFAKV) and K89. The active-site Proton acceptor is the D182. T208 bears the Phosphothreonine mark. Position 215 is a phosphothreonine; by LKB1 and TAOK1 (T215). At S219 the chain carries Phosphoserine; by GSK3-beta. Positions 329 to 370 (DLSDAKRIDIMVTMGFARDEINDALVSQKYDEVMATYILLGR) constitute a UBA domain. 2 disordered regions span residues 377–498 (GGES…SGGS) and 518–699 (QNGR…KPRS). S382, S390, S393, S403, S423, and S444 each carry phosphoserine. The segment covering 387 to 403 (CQRSRPSSDLNNSTLQS) has biased composition (polar residues). The segment covering 447–459 (SEQKEEWGKDTAR) has biased composition (basic and acidic residues). Residues 462 to 473 (GSTTVGSKSEVT) show a composition bias toward polar residues. The residue at position 475 (S475) is a Phosphoserine. Over residues 486 to 495 (TASPSNNVYS) the composition is skewed to polar residues. 2 stretches are compositionally biased toward low complexity: residues 523–547 (SSLT…GPSA) and 585–599 (PAAS…ASTP). The residue at position 588 (S588) is a Phosphoserine. Phosphothreonine; by PKC/PRKCZ is present on T613. The segment covering 647 to 657 (GTSTGIISKIT) has biased composition (polar residues). 2 stretches are compositionally biased toward basic and acidic residues: residues 661–676 (VRRD…RADT) and 683–697 (DPKE…EAKP). S666 bears the Phosphoserine mark. Residues 746–795 (DARQDSLVQWEMEVCKLPRLSLNGVRFKRISGTSIAFKNIASKIANELKL) enclose the KA1 domain.

This sequence belongs to the protein kinase superfamily. CAMK Ser/Thr protein kinase family. SNF1 subfamily. Interacts with MAPT/TAU. Mg(2+) serves as cofactor. Post-translationally, phosphorylated at Thr-215 by STK11/LKB1 in complex with STE20-related adapter-alpha (STRADA) pseudo kinase and CAB39. Phosphorylation at Thr-215 by TAOK1 activates the kinase activity, leading to phosphorylation and detachment of MAPT/TAU from microtubules. Phosphorylation at Ser-219 by GSK3-beta (GSK3B) inhibits the kinase activity. Phosphorylation at Thr-613 by PRKCZ/aPKC in polarized epithelial cells inhibits the kinase activity.

The protein localises to the cell membrane. It localises to the cytoplasm. It is found in the cytoskeleton. Its subcellular location is the cell projection. The protein resides in the dendrite. It carries out the reaction L-seryl-[protein] + ATP = O-phospho-L-seryl-[protein] + ADP + H(+). It catalyses the reaction L-threonyl-[protein] + ATP = O-phospho-L-threonyl-[protein] + ADP + H(+). The catalysed reaction is L-seryl-[tau protein] + ATP = O-phospho-L-seryl-[tau protein] + ADP + H(+). The enzyme catalyses L-threonyl-[tau protein] + ATP = O-phospho-L-threonyl-[tau protein] + ADP + H(+). With respect to regulation, inhibited by phosphorylation at Ser-219. Activated by phosphorylation on Thr-215. Functionally, serine/threonine-protein kinase. Involved in cell polarity and microtubule dynamics regulation. Phosphorylates DCX, MAP2 and MAP4. Phosphorylates the microtubule-associated protein MAPT/TAU. Involved in cell polarity by phosphorylating the microtubule-associated proteins MAP2, MAP4 and MAPT/TAU at KXGS motifs, causing detachment from microtubules, and their disassembly. Involved in the regulation of neuronal migration through its dual activities in regulating cellular polarity and microtubule dynamics, possibly by phosphorylating and regulating DCX. Also acts as a positive regulator of the Wnt signaling pathway, probably by mediating phosphorylation of dishevelled proteins (DVL1, DVL2 and/or DVL3). This chain is Serine/threonine-protein kinase MARK1, found in Mus musculus (Mouse).